Consider the following 304-residue polypeptide: RING-H2 finger protein ATL2 (304 aa).

Residues 30-50 form a helical membrane-spanning segment; sequence IMLSAIVILFFVVILMVFLHL. The RING-type; atypical zinc finger occupies 119–161; the sequence is CAVCLSEFEESETGRVLPNCQHTFHVDCIDMWFHSHSTCPLCR. A disordered region spans residues 194-304; that stretch reads EPSSSSGLTD…DIERGGEESR (111 aa). Residues 227–244 are compositionally biased toward basic and acidic residues; sequence VPRRTFSEFEDELTRRDS. Positions 283–293 are enriched in polar residues; the sequence is PTLSCRIQMTE. Basic and acidic residues predominate over residues 295–304; it reads DIERGGEESR.

The protein belongs to the RING-type zinc finger family. ATL subfamily. Preferentially expressed around the apical meristem region.

It localises to the membrane. It carries out the reaction S-ubiquitinyl-[E2 ubiquitin-conjugating enzyme]-L-cysteine + [acceptor protein]-L-lysine = [E2 ubiquitin-conjugating enzyme]-L-cysteine + N(6)-ubiquitinyl-[acceptor protein]-L-lysine.. It functions in the pathway protein modification; protein ubiquitination. Functionally, may be involved in the early steps of the plant defense signaling pathway. In Arabidopsis thaliana (Mouse-ear cress), this protein is RING-H2 finger protein ATL2 (ATL2).